A 153-amino-acid polypeptide reads, in one-letter code: Ribosomal RNA large subunit methyltransferase H (153 aa).

Residues isoleucine 75, glycine 103, and 121 to 126 (LSAMTF) contribute to the S-adenosyl-L-methionine site.

This sequence belongs to the RNA methyltransferase RlmH family. Homodimer.

It localises to the cytoplasm. It catalyses the reaction pseudouridine(1915) in 23S rRNA + S-adenosyl-L-methionine = N(3)-methylpseudouridine(1915) in 23S rRNA + S-adenosyl-L-homocysteine + H(+). Specifically methylates the pseudouridine at position 1915 (m3Psi1915) in 23S rRNA. The protein is Ribosomal RNA large subunit methyltransferase H of Helicobacter hepaticus (strain ATCC 51449 / 3B1).